We begin with the raw amino-acid sequence, 204 residues long: E2 ubiquitin-conjugating enzyme PEX4 (204 aa).

Residues 2-196 (SAEKRLLQEY…IEYYVGRYSI (195 aa)) form the UBC core domain. C133 serves as the catalytic Glycyl thioester intermediate.

Belongs to the ubiquitin-conjugating enzyme family.

The protein resides in the peroxisome membrane. It carries out the reaction S-ubiquitinyl-[E1 ubiquitin-activating enzyme]-L-cysteine + [E2 ubiquitin-conjugating enzyme]-L-cysteine = [E1 ubiquitin-activating enzyme]-L-cysteine + S-ubiquitinyl-[E2 ubiquitin-conjugating enzyme]-L-cysteine.. The protein operates within protein modification; protein ubiquitination. E2 ubiquitin-conjugating enzyme involved in peroxisome biosynthesis. Acts late in peroxisomal matrix protein import, after matrix protein translocation. Required for both monoubiquitination and polyubiquitination of coreceptor PEX20. polyubiquitination of PEX20 at conserved lysine 'Lys-19' near the N-terminus leads to its and proteasomal degradation, whereas a monoubiquitination at the conserved cysteine 'Cys-8' is essential for its recycling. The protein is E2 ubiquitin-conjugating enzyme PEX4 of Komagataella phaffii (strain GS115 / ATCC 20864) (Yeast).